A 289-amino-acid polypeptide reads, in one-letter code: Bis(5'-nucleosyl)-tetraphosphatase, symmetrical (289 aa).

This sequence belongs to the Ap4A hydrolase family.

It carries out the reaction P(1),P(4)-bis(5'-adenosyl) tetraphosphate + H2O = 2 ADP + 2 H(+). Hydrolyzes diadenosine 5',5'''-P1,P4-tetraphosphate to yield ADP. This Yersinia pestis bv. Antiqua (strain Antiqua) protein is Bis(5'-nucleosyl)-tetraphosphatase, symmetrical.